A 309-amino-acid chain; its full sequence is Putative taste receptor type 2 member 33 (309 aa).

Methionine 1 is a topological domain (extracellular). A helical transmembrane segment spans residues 2–22; it reads VYFLPIIFSILVVFAFVLGNF. At 23-46 the chain is on the cytoplasmic side; it reads SNGFIALVNVIDWVKRQKISSADQ. The helical transmembrane segment at 47–67 threads the bilayer; that stretch reads ILTALVVSRVGLLWVILLHWY. At 68 to 86 the chain is on the extracellular side; the sequence is ANVFNSALYSLEVRIVASN. Asparagine 86 carries N-linked (GlcNAc...) asparagine glycosylation. The chain crosses the membrane as a helical span at residues 87–107; the sequence is ISAVINHFSIWLAASLSIFYL. Residues 108 to 127 are Cytoplasmic-facing; sequence LKIANFSNLIFLHLKKRIKS. The chain crosses the membrane as a helical span at residues 128–148; that stretch reads VVLVILLGPLVFLICNLAVIT. Residues 149-181 lie on the Extracellular side of the membrane; it reads MDERVWTKEYEGNVTWKIKLRNAIHLSSLTVTT. The N-linked (GlcNAc...) asparagine glycan is linked to asparagine 161. The helical transmembrane segment at 182–202 threads the bilayer; that stretch reads LANLIPFTLSLICFLLLICSL. Topologically, residues 203-229 are cytoplasmic; it reads CKHLKKMQLHSKGSQDPSTKVHIKALQ. A helical transmembrane segment spans residues 230–250; that stretch reads TVISFLMLCAIYFLSIMISVW. The Extracellular portion of the chain corresponds to 251 to 259; that stretch reads NLRSLENKP. A helical transmembrane segment spans residues 260–280; that stretch reads VFMFCKAIRFSYPSIHPFILI. Topologically, residues 281-309 are cytoplasmic; the sequence is WGNKKLKQTFLSVFWQVRYWVKGEKPSSP.

It belongs to the G-protein coupled receptor T2R family.

The protein resides in the membrane. Its function is as follows. Putative taste receptor which may play a role in the perception of bitterness. In Homo sapiens (Human), this protein is Putative taste receptor type 2 member 33.